Consider the following 35-residue polypeptide: Photosystem II reaction center protein T (35 aa).

A helical membrane pass occupies residues 3-23 (ALVYTFLLIGTLGIIFFAIFF).

Belongs to the PsbT family. As to quaternary structure, PSII is composed of 1 copy each of membrane proteins PsbA, PsbB, PsbC, PsbD, PsbE, PsbF, PsbH, PsbI, PsbJ, PsbK, PsbL, PsbM, PsbT, PsbY, PsbZ, Psb30/Ycf12, at least 3 peripheral proteins of the oxygen-evolving complex and a large number of cofactors. It forms dimeric complexes.

The protein resides in the plastid. The protein localises to the chloroplast thylakoid membrane. Functionally, found at the monomer-monomer interface of the photosystem II (PS II) dimer, plays a role in assembly and dimerization of PSII. PSII is a light-driven water plastoquinone oxidoreductase, using light energy to abstract electrons from H(2)O, generating a proton gradient subsequently used for ATP formation. This Coleochaete orbicularis (Charophycean green alga) protein is Photosystem II reaction center protein T.